The following is a 376-amino-acid chain: Alanine racemase (376 aa).

Residue Lys40 is the Proton acceptor; specific for D-alanine of the active site. Lys40 is subject to N6-(pyridoxal phosphate)lysine. A substrate-binding site is contributed by Arg138. Residue Tyr270 is the Proton acceptor; specific for L-alanine of the active site. Met317 provides a ligand contact to substrate.

It belongs to the alanine racemase family. Pyridoxal 5'-phosphate serves as cofactor.

The catalysed reaction is L-alanine = D-alanine. The protein operates within amino-acid biosynthesis; D-alanine biosynthesis; D-alanine from L-alanine: step 1/1. Functionally, catalyzes the interconversion of L-alanine and D-alanine. May also act on other amino acids. This chain is Alanine racemase (alr), found in Lactobacillus acidophilus (strain ATCC 700396 / NCK56 / N2 / NCFM).